The following is a 234-amino-acid chain: tRNA (guanine-N(1)-)-methyltransferase (234 aa).

Residues G115 and 135 to 140 (VGDYIL) each bind S-adenosyl-L-methionine.

It belongs to the RNA methyltransferase TrmD family. In terms of assembly, homodimer.

The protein localises to the cytoplasm. The enzyme catalyses guanosine(37) in tRNA + S-adenosyl-L-methionine = N(1)-methylguanosine(37) in tRNA + S-adenosyl-L-homocysteine + H(+). In terms of biological role, specifically methylates guanosine-37 in various tRNAs. This Rickettsia typhi (strain ATCC VR-144 / Wilmington) protein is tRNA (guanine-N(1)-)-methyltransferase.